The chain runs to 416 residues: Phosphoribosylamine--glycine ligase (416 aa).

The ATP-grasp domain maps to 107–313 (KDFMKKYNVK…FVDLINAAMD (207 aa)). Residue 133 to 194 (LKKCTYPIVI…EEYLEGVEAS (62 aa)) coordinates ATP. Mg(2+)-binding residues include E283 and N285.

It belongs to the GARS family. Mg(2+) serves as cofactor. It depends on Mn(2+) as a cofactor.

The enzyme catalyses 5-phospho-beta-D-ribosylamine + glycine + ATP = N(1)-(5-phospho-beta-D-ribosyl)glycinamide + ADP + phosphate + H(+). It participates in purine metabolism; IMP biosynthesis via de novo pathway; N(1)-(5-phospho-D-ribosyl)glycinamide from 5-phospho-alpha-D-ribose 1-diphosphate: step 2/2. The protein is Phosphoribosylamine--glycine ligase of Clostridium acetobutylicum (strain ATCC 824 / DSM 792 / JCM 1419 / IAM 19013 / LMG 5710 / NBRC 13948 / NRRL B-527 / VKM B-1787 / 2291 / W).